Here is a 138-residue protein sequence, read N- to C-terminus: Acidic phospholipase A2 (138 aa).

The signal sequence occupies residues M1 to G16. 7 disulfide bridges follow: C42–C131, C44–C60, C59–C111, C65–C138, C66–C104, C73–C97, and C91–C102. 3 residues coordinate Ca(2+): Y43, G45, and G47. The active site involves H63. D64 is a Ca(2+) binding site. Residue D105 is part of the active site.

Belongs to the phospholipase A2 family. Group II subfamily. D49 sub-subfamily. As to quaternary structure, homodimer. It depends on Ca(2+) as a cofactor. Expressed by the venom gland.

The protein localises to the secreted. It carries out the reaction a 1,2-diacyl-sn-glycero-3-phosphocholine + H2O = a 1-acyl-sn-glycero-3-phosphocholine + a fatty acid + H(+). Its function is as follows. PLA2 catalyzes the calcium-dependent hydrolysis of the 2-acyl groups in 3-sn-phosphoglycerides. The protein is Acidic phospholipase A2 of Crotalus atrox (Western diamondback rattlesnake).